Consider the following 477-residue polypeptide: 3-succinoylsemialdehyde-pyridine dehydrogenase (477 aa).

Position 202–208 (202–208) interacts with NAD(+); that stretch reads GDGPGVG. Catalysis depends on residues E246 and C280.

Belongs to the aldehyde dehydrogenase family.

It carries out the reaction 4-oxo-4-(pyridin-3-yl)butanal + NADP(+) + H2O = 4-oxo-4-(pyridin-3-yl)butanoate + NADPH + 2 H(+). The protein operates within alkaloid degradation; nicotine degradation. Functionally, catalyzes the dehydrogenation of 3-succinoylsemialdehyde-pyridine to 3-succinoyl-pyridine in the nicotine degradation pathway. The polypeptide is 3-succinoylsemialdehyde-pyridine dehydrogenase (ald) (Pseudomonas sp).